We begin with the raw amino-acid sequence, 638 residues long: MTKSNYSANNITVLKGLEAVRKRPGMYIGSTGPDGLHHLVYEVVDNCIDEAMAGFCDKILVVLEPNDIVRVEDNGRGIPVDIHPTEKISALELVLTRLHAGGKFDKGSYKVSGGLHGVGVSVVNALSVWMEAKVYKDGFEHYAKFEKGSILEPVKKIGETEKSGTVIRWAVDPSIFTETTVYNFEVLATRLRELAFLNSKISITMRDERLSTPKEVTFAFEGGISQFVSYLNESKQVFPKSPVFIEGEKNDILCEVAIQYNDGYNENLLSFVNDINTREGGTHLEGFKTALTRVMNDFLKKYPKLVKKMDKEEKLTGEDVRAGLTAIVSVKVPEPQFEGQTKTKLGNSDVRGIVDSFVNEKLTLFFEQNPNEVEKVLEKCVAEAAARIAARRAKEATRRKSGLDSFGLPGKLADCSLKDPESCEVYIVEGDSAGGSAKKGRDSKTQAILPLWGKMLNVEKTRLDKVVNNEKLQPIIATLGTGIGKDFNIEKLRYHKVIIMADADVDGSHIRTLLLTFFFRYMPQVIEKGHVYLAMPPLYKISHNKKEWYVYNDDERDSVLDQIGRGNNAAVQRYKGLGEMDGTQLWETTMDPARRKMMRVTLPDAVEADRIFSTLMGEEVEPRRKFIEENAVYANLDV.

Residues 423–537 form the Toprim domain; the sequence is CEVYIVEGDS…KGHVYLAMPP (115 aa). Glu429, Asp502, and Asp504 together coordinate Mg(2+).

Belongs to the type II topoisomerase GyrB family. In terms of assembly, heterotetramer, composed of two GyrA and two GyrB chains. In the heterotetramer, GyrA contains the active site tyrosine that forms a transient covalent intermediate with DNA, while GyrB binds cofactors and catalyzes ATP hydrolysis. Requires Mg(2+) as cofactor. Mn(2+) is required as a cofactor. The cofactor is Ca(2+).

It is found in the cytoplasm. It carries out the reaction ATP-dependent breakage, passage and rejoining of double-stranded DNA.. A type II topoisomerase that negatively supercoils closed circular double-stranded (ds) DNA in an ATP-dependent manner to modulate DNA topology and maintain chromosomes in an underwound state. Negative supercoiling favors strand separation, and DNA replication, transcription, recombination and repair, all of which involve strand separation. Also able to catalyze the interconversion of other topological isomers of dsDNA rings, including catenanes and knotted rings. Type II topoisomerases break and join 2 DNA strands simultaneously in an ATP-dependent manner. This is DNA gyrase subunit B from Treponema denticola (strain ATCC 35405 / DSM 14222 / CIP 103919 / JCM 8153 / KCTC 15104).